The primary structure comprises 175 residues: B9 domain-containing protein 2 (175 aa).

A C2 B9-type domain is found at 2 to 118; it reads AELHIIGQII…QCVTWRPLGS (117 aa).

This sequence belongs to the B9D family. In terms of assembly, part of the tectonic-like complex (also named B9 complex).

Its subcellular location is the cytoplasm. The protein resides in the cytoskeleton. The protein localises to the cilium basal body. It localises to the cilium axoneme. In terms of biological role, component of the tectonic-like complex, a complex localized at the transition zone of primary cilia and acting as a barrier that prevents diffusion of transmembrane proteins between the cilia and plasma membranes. The sequence is that of B9 domain-containing protein 2 (b9d2) from Danio rerio (Zebrafish).